Here is a 498-residue protein sequence, read N- to C-terminus: Glycerol kinase (498 aa).

T11 provides a ligand contact to ADP. The ATP site is built by T11, S12, and S13. T11 is a binding site for sn-glycerol 3-phosphate. R15 provides a ligand contact to ADP. R81, E82, Y133, and D242 together coordinate sn-glycerol 3-phosphate. 5 residues coordinate glycerol: R81, E82, Y133, D242, and Q243. Residues T264 and G307 each contribute to the ADP site. Residues T264, G307, Q311, and G408 each coordinate ATP. Residues G408 and N412 each contribute to the ADP site.

The protein belongs to the FGGY kinase family.

The catalysed reaction is glycerol + ATP = sn-glycerol 3-phosphate + ADP + H(+). The protein operates within polyol metabolism; glycerol degradation via glycerol kinase pathway; sn-glycerol 3-phosphate from glycerol: step 1/1. Inhibited by fructose 1,6-bisphosphate (FBP). Key enzyme in the regulation of glycerol uptake and metabolism. Catalyzes the phosphorylation of glycerol to yield sn-glycerol 3-phosphate. In Ralstonia pickettii (strain 12J), this protein is Glycerol kinase.